Reading from the N-terminus, the 251-residue chain is Triosephosphate isomerase (251 aa).

10–12 (NWK) is a binding site for substrate. Catalysis depends on histidine 99, which acts as the Electrophile. The active-site Proton acceptor is the glutamate 167. Residues glycine 173, serine 211, and 232 to 233 (GG) contribute to the substrate site.

The protein belongs to the triosephosphate isomerase family. In terms of assembly, homodimer.

It localises to the cytoplasm. It carries out the reaction D-glyceraldehyde 3-phosphate = dihydroxyacetone phosphate. It participates in carbohydrate biosynthesis; gluconeogenesis. The protein operates within carbohydrate degradation; glycolysis; D-glyceraldehyde 3-phosphate from glycerone phosphate: step 1/1. Its function is as follows. Involved in the gluconeogenesis. Catalyzes stereospecifically the conversion of dihydroxyacetone phosphate (DHAP) to D-glyceraldehyde-3-phosphate (G3P). The polypeptide is Triosephosphate isomerase (Neisseria meningitidis serogroup A / serotype 4A (strain DSM 15465 / Z2491)).